The primary structure comprises 84 residues: Putative membrane protein insertion efficiency factor (84 aa).

It belongs to the UPF0161 family.

The protein localises to the cell inner membrane. Its function is as follows. Could be involved in insertion of integral membrane proteins into the membrane. This is Putative membrane protein insertion efficiency factor from Nostoc sp. (strain PCC 7120 / SAG 25.82 / UTEX 2576).